The chain runs to 488 residues: Eukaryotic translation initiation factor 3 subunit L (488 aa).

Disordered stretches follow at residues 1–34 (MSLP…YREQ) and 427–449 (SEGG…HGKE). The span at 7–16 (QNRDAARRAP) shows a compositional bias: basic and acidic residues. A compositionally biased stretch (acidic residues) spans 17 to 27 (DDDDDAEEETM). Positions 256 to 450 (DAIRMFSHIL…RSRLRHGKEI (195 aa)) constitute a PCI domain. Basic and acidic residues predominate over residues 431-440 (LLERRGDPQQ).

Belongs to the eIF-3 subunit L family. As to quaternary structure, component of the eukaryotic translation initiation factor 3 (eIF-3) complex.

The protein resides in the cytoplasm. Functionally, component of the eukaryotic translation initiation factor 3 (eIF-3) complex, which is involved in protein synthesis of a specialized repertoire of mRNAs and, together with other initiation factors, stimulates binding of mRNA and methionyl-tRNAi to the 40S ribosome. The eIF-3 complex specifically targets and initiates translation of a subset of mRNAs involved in cell proliferation. This is Eukaryotic translation initiation factor 3 subunit L from Phaeosphaeria nodorum (strain SN15 / ATCC MYA-4574 / FGSC 10173) (Glume blotch fungus).